The primary structure comprises 118 residues: LYR motif containing protein 1 (118 aa).

The tract at residues 91 to 118 is disordered; the sequence is TQKGRKLRAQQRLRKQAKPVYLQSQDET. A compositionally biased stretch (basic residues) spans 93 to 107; that stretch reads KGRKLRAQQRLRKQA.

It belongs to the complex I LYR family.

The protein is LYR motif containing protein 1 (lyrm1) of Danio rerio (Zebrafish).